The sequence spans 74 residues: UPF0248 protein MK0350 (74 aa).

It belongs to the UPF0248 family.

This chain is UPF0248 protein MK0350, found in Methanopyrus kandleri (strain AV19 / DSM 6324 / JCM 9639 / NBRC 100938).